Consider the following 294-residue polypeptide: Acetylglutamate kinase (294 aa).

Substrate is bound by residues 63-64 (GG), Arg85, and Asn188.

This sequence belongs to the acetylglutamate kinase family. ArgB subfamily.

It localises to the cytoplasm. It catalyses the reaction N-acetyl-L-glutamate + ATP = N-acetyl-L-glutamyl 5-phosphate + ADP. It functions in the pathway amino-acid biosynthesis; L-arginine biosynthesis; N(2)-acetyl-L-ornithine from L-glutamate: step 2/4. In terms of biological role, catalyzes the ATP-dependent phosphorylation of N-acetyl-L-glutamate. This chain is Acetylglutamate kinase, found in Methanococcus aeolicus (strain ATCC BAA-1280 / DSM 17508 / OCM 812 / Nankai-3).